Consider the following 69-residue polypeptide: UPF0270 protein VCM66_2532 (69 aa).

It belongs to the UPF0270 family.

In Vibrio cholerae serotype O1 (strain M66-2), this protein is UPF0270 protein VCM66_2532.